A 369-amino-acid chain; its full sequence is Coproporphyrin III ferrochelatase (369 aa).

Fe-coproporphyrin III-binding residues include S61 and Y130. 2 residues coordinate Fe(2+): H197 and E286.

The protein belongs to the ferrochelatase family.

The protein localises to the cytoplasm. The enzyme catalyses Fe-coproporphyrin III + 2 H(+) = coproporphyrin III + Fe(2+). Its pathway is porphyrin-containing compound metabolism; protoheme biosynthesis. Its function is as follows. Involved in coproporphyrin-dependent heme b biosynthesis. Catalyzes the insertion of ferrous iron into coproporphyrin III to form Fe-coproporphyrin III. This Corynebacterium diphtheriae (strain ATCC 700971 / NCTC 13129 / Biotype gravis) protein is Coproporphyrin III ferrochelatase.